Consider the following 313-residue polypeptide: Ubiquinone biosynthesis protein COQ4, mitochondrial (313 aa).

Residues His197, Asp198, His201, and Glu213 each contribute to the Zn(2+) site. The segment at 290 to 313 (QPPDLRELRRKQKKLPEPERENAN) is disordered. The segment covering 303–313 (KLPEPERENAN) has biased composition (basic and acidic residues).

Belongs to the COQ4 family. In terms of assembly, component of a multi-subunit COQ enzyme complex, composed of at least COQ3, COQ4, COQ5, COQ6, COQ7 and COQ9. Zn(2+) serves as cofactor.

It localises to the mitochondrion inner membrane. The catalysed reaction is a 4-hydroxy-3-methoxy-5-(all-trans-polyprenyl)benzoate + H(+) = a 2-methoxy-6-(all-trans-polyprenyl)phenol + CO2. It participates in cofactor biosynthesis; ubiquinone biosynthesis. In terms of biological role, lyase that catalyzes the C1-decarboxylation of 4-hydroxy-3-methoxy-5-(all-trans-polyprenyl)benzoic acid into 2-methoxy-6-(all-trans-polyprenyl)phenol during ubiquinone biosynthesis. The protein is Ubiquinone biosynthesis protein COQ4, mitochondrial of Meyerozyma guilliermondii (strain ATCC 6260 / CBS 566 / DSM 6381 / JCM 1539 / NBRC 10279 / NRRL Y-324) (Yeast).